Here is a 1124-residue protein sequence, read N- to C-terminus: MLAYCVQDATVVDVEKRRSPSKHYVYIINVTWSDSTSQTIYRRYSKFFDLQMQLLDKFPIEGGQKDPKQRIIPFLPGKILFRRSHIRDVAVKRLKPIDEYCRALVRLPPHISQCDEVFRFFEARPEDVNPPKEDYGSSKRKSVWLSSWAESPKKDVTGADTNAEPMILEQYVVVSNYKKQENSELSLQAGEVVDVIEKNESGWWFVSTSEEQGWVPATYLEAQNGTRDDSDINTSKTGEVSKRRKAHLRRLDRRWTLGGMVNRQHSREEKYVTVQPYTSQSKDEIGFEKGVTVEVIRKNLEGWWYIRYLGKEGWAPASYLKKAKDDLPTRKKNLAGPVEIIGNIMEISNLLNKKASGDKEAPAEGEGSEAPITKKEISLPILCNASNGSALAIPERTTSKLAQGSPAVARIAPQRAQISSPNLRTRPPPRRESSLGFQLPKPPEPPSVEVEYYTIAEFQSCISDGISFRGGQKAEVIDKNSGGWWYVQIGEKEGWAPASYIDKRKKPNLSRRTSTLTRPKVPPPAPPSKPKEAEENPVGACESQGSPLKVKYEEPEYDVPAFGFDSEPEMNEEPSGDRGSGDKHPAQPRRISPASSLQRAHFKVGESSEDVALEEETIYENEGFRPYTEDTLSARGSSGDSDSPGSSSLSLAVKNSPKSDSPKSSSLLKLKAEKNAQAELGKNQSNISFSSSVTISTTCSSSSSSSSLSKNNGDLKPRSASDAGIRDTPKVGTKKDPDVKAGLASCARAKPSVRPKPVLNRAESQSQEKMDISSLRRQLRPTGQLRGGLKGSRSEDSELPPQMASEGSRRGSADIIPLTATTPPCVPKKEWEGQGATYVTCSAYQKVQDSEISFPEGAEVHVLEKAESGWWYVRFGELEGWAPSHYLVAEENQQPDTASKEGDTGKSSQNEGKSDSLEKIEKRVQALNTVNQSKRATPPIPSKPPGGFGKTSGTVAVKMRNGVRQVAVRPQSVFVSPPPKDNNLSCALRRNESLTATDSLRGVRRNSSFSTARSAAAEAKGRLAERAASQGSESPLLPTQRKGIPVSPVRPKPIEKSQFIHNNLKDVYISIADYEGDEETAGFQEGVSMEVLEKNPNGWWYCQILDEVKPFKGWVPSNYLEKKN.

Residues 4–128 enclose the PX domain; it reads YCVQDATVVD…RFFEARPEDV (125 aa). The SH3 1 domain occupies 166 to 225; it reads MILEQYVVVSNYKKQENSELSLQAGEVVDVIEKNESGWWFVSTSEEQGWVPATYLEAQNG. T256 carries the post-translational modification Phosphothreonine. An SH3 2 domain is found at 266–325; it reads SREEKYVTVQPYTSQSKDEIGFEKGVTVEVIRKNLEGWWYIRYLGKEGWAPASYLKKAKD. Phosphoserine occurs at positions 405 and 420. Disordered regions lie at residues 414-443, 504-672, 692-830, and 886-952; these read QRAQ…PKPP, RKKP…KLKA, SVTI…PKKE, and YLVA…GKTS. The SH3 3 domain occupies 447–506; sequence SVEVEYYTIAEFQSCISDGISFRGGQKAEVIDKNSGGWWYVQIGEKEGWAPASYIDKRKK. S546 and S566 each carry phosphoserine. Residues 575–585 are compositionally biased toward basic and acidic residues; it reads SGDRGSGDKHP. A Phosphoserine modification is found at S592. A compositionally biased stretch (acidic residues) spans 607–619; it reads SSEDVALEEETIY. Low complexity-rich tracts occupy residues 633 to 669 and 692 to 709; these read SARG…SLLK and SVTI…SSLS. The residue at position 643 (S643) is a Phosphoserine. The segment covering 713–739 has biased composition (basic and acidic residues); that stretch reads GDLKPRSASDAGIRDTPKVGTKKDPDV. T728 is modified (phosphothreonine). Residues S764, S766, and S812 each carry the phosphoserine modification. At T822 the chain carries Phosphothreonine. Residues 833–892 form the SH3 4 domain; it reads GQGATYVTCSAYQKVQDSEISFPEGAEVHVLEKAESGWWYVRFGELEGWAPSHYLVAEEN. Residues 907–937 are a coiled coil; sequence SSQNEGKSDSLEKIEKRVQALNTVNQSKRAT. Basic and acidic residues predominate over residues 912–924; the sequence is GKSDSLEKIEKRV. The span at 926–935 shows a compositional bias: polar residues; that stretch reads ALNTVNQSKR. Phosphoserine occurs at positions 993, 1007, 1008, and 1029. The disordered stretch occupies residues 1020 to 1050; it reads KGRLAERAASQGSESPLLPTQRKGIPVSPVR. An SH3 5 domain is found at 1063–1124; sequence NLKDVYISIA…VPSNYLEKKN (62 aa).

It belongs to the SH3PXD2 family. As to quaternary structure, interacts with ADAM12, ADAM15 and ADAM19. Interacts with NOXO1. Interacts (via SH3 domains) with NOXA1; the interaction is direct. Interacts (via N-terminus) with CYBA. Interacts with FASLG. Interacts (via PX domain) with RAB40B (GTP-bound); interaction promotes invadopodia-mediated extracellular matrix degradation. Tyrosine phosphorylated by SRC. Phosphorylation plays a regulatory role in the protein localization. The intramolecular interaction of the PX domain with the third SH3 domain maintains the protein in the cytoplasm and phosphorylation disrupts this interaction, resulting in the redistribution of the protein from cytoplasm to the perimembrane region. Phosphorylated on serine upon DNA damage, probably by ATM or ATR. Widely expressed. Not found in the spleen and testis.

It is found in the cytoplasm. The protein localises to the cell projection. Its subcellular location is the podosome. Its function is as follows. Adapter protein involved in invadopodia and podosome formation, extracellular matrix degradation and invasiveness of some cancer cells. Binds matrix metalloproteinases (ADAMs), NADPH oxidases (NOXs) and phosphoinositides. Acts as an organizer protein that allows NOX1- or NOX3-dependent reactive oxygen species (ROS) generation and ROS localization. In association with ADAM12, mediates the neurotoxic effect of amyloid-beta peptide. This is SH3 and PX domain-containing protein 2A from Mus musculus (Mouse).